The sequence spans 1048 residues: Selenate reductase subunit A (1048 aa).

Positions 1-39 (MENQHQKFISRRNFIKTSALLGGTAFLGTGLPNIKKTYS) form a signal peptide, tat-type signal. A 4Fe-4S Mo/W bis-MGD-type domain is found at 56 to 129 (ENILYSACLQ…AGIQHAYDPY (74 aa)). Residues Cys63, Cys66, Cys70, and Cys115 each contribute to the [4Fe-4S] cluster site. Cys270 contributes to the Mo-bis(molybdopterin guanine dinucleotide) binding site.

It belongs to the prokaryotic molybdopterin-containing oxidoreductase family. The complex is composed of three subunits: SrdA, SrdB and SrdC. Requires [4Fe-4S] cluster as cofactor. The cofactor is Mo-bis(molybdopterin guanine dinucleotide). In terms of processing, predicted to be exported by the Tat system. The position of the signal peptide cleavage has not been experimentally proven.

The protein resides in the secreted. It carries out the reaction selenite + a quinone + H2O = selenate + a quinol. Its function is as follows. Component of the respiratory selenate reductase complex, which catalyzes the reduction of selenate to selenite. SrdA is probably the catalytic subunit that reduces selenate. This is Selenate reductase subunit A from Mesobacillus selenatarsenatis (strain DSM 18680 / JCM 14380 / FERM P-15431 / SF-1).